We begin with the raw amino-acid sequence, 428 residues long: Serine--tRNA ligase (428 aa).

231–233 is an L-serine binding site; it reads TSE. ATP contacts are provided by residues 262–264 and Val278; that span reads RRE. Glu285 is an L-serine binding site. ATP is bound at residue 349–352; the sequence is ELTS. Thr384 lines the L-serine pocket.

It belongs to the class-II aminoacyl-tRNA synthetase family. Type-1 seryl-tRNA synthetase subfamily. Homodimer. The tRNA molecule binds across the dimer.

It is found in the cytoplasm. It carries out the reaction tRNA(Ser) + L-serine + ATP = L-seryl-tRNA(Ser) + AMP + diphosphate + H(+). The catalysed reaction is tRNA(Sec) + L-serine + ATP = L-seryl-tRNA(Sec) + AMP + diphosphate + H(+). It participates in aminoacyl-tRNA biosynthesis; selenocysteinyl-tRNA(Sec) biosynthesis; L-seryl-tRNA(Sec) from L-serine and tRNA(Sec): step 1/1. Functionally, catalyzes the attachment of serine to tRNA(Ser). Is also able to aminoacylate tRNA(Sec) with serine, to form the misacylated tRNA L-seryl-tRNA(Sec), which will be further converted into selenocysteinyl-tRNA(Sec). The polypeptide is Serine--tRNA ligase (Bifidobacterium longum subsp. infantis (strain ATCC 15697 / DSM 20088 / JCM 1222 / NCTC 11817 / S12)).